The sequence spans 303 residues: uncharacterized protein (303 aa).

One can recognise a Fe2OG dioxygenase domain in the interval 173 to 300 (KLPELLGQLN…RFTVNGWIRK (128 aa)).

Fe(2+) is required as a cofactor. The cofactor is L-ascorbate.

This is an uncharacterized protein from Synechocystis sp. (strain ATCC 27184 / PCC 6803 / Kazusa).